The primary structure comprises 371 residues: Bifunctional enzyme IspD/IspF (371 aa).

Positions 1 to 210 are 2-C-methyl-D-erythritol 4-phosphate cytidylyltransferase; that stretch reads MSEMSLIMLA…LNLPTPSFEI (210 aa). Residues 211 to 371 form a 2-C-methyl-D-erythritol 2,4-cyclodiphosphate synthase region; that stretch reads FTGNGFDVHE…NLKYFDWTRL (161 aa). Positions 217 and 219 each coordinate a divalent metal cation. 4-CDP-2-C-methyl-D-erythritol 2-phosphate is bound by residues 217–219 and 243–244; these read DVH and HS. His-251 serves as a coordination point for a divalent metal cation. Residues 265-267, 270-274, 341-344, Phe-348, and Arg-351 each bind 4-CDP-2-C-methyl-D-erythritol 2-phosphate; these read DIG, YPDTD, and TTTE.

This sequence in the N-terminal section; belongs to the IspD/TarI cytidylyltransferase family. IspD subfamily. The protein in the C-terminal section; belongs to the IspF family. A divalent metal cation serves as cofactor.

It carries out the reaction 2-C-methyl-D-erythritol 4-phosphate + CTP + H(+) = 4-CDP-2-C-methyl-D-erythritol + diphosphate. The catalysed reaction is 4-CDP-2-C-methyl-D-erythritol 2-phosphate = 2-C-methyl-D-erythritol 2,4-cyclic diphosphate + CMP. It participates in isoprenoid biosynthesis; isopentenyl diphosphate biosynthesis via DXP pathway; isopentenyl diphosphate from 1-deoxy-D-xylulose 5-phosphate: step 2/6. The protein operates within isoprenoid biosynthesis; isopentenyl diphosphate biosynthesis via DXP pathway; isopentenyl diphosphate from 1-deoxy-D-xylulose 5-phosphate: step 4/6. Functionally, bifunctional enzyme that catalyzes the formation of 4-diphosphocytidyl-2-C-methyl-D-erythritol from CTP and 2-C-methyl-D-erythritol 4-phosphate (MEP) (IspD), and catalyzes the conversion of 4-diphosphocytidyl-2-C-methyl-D-erythritol 2-phosphate (CDP-ME2P) to 2-C-methyl-D-erythritol 2,4-cyclodiphosphate (ME-CPP) with a corresponding release of cytidine 5-monophosphate (CMP) (IspF). The polypeptide is Bifunctional enzyme IspD/IspF (Campylobacter jejuni (strain RM1221)).